A 325-amino-acid polypeptide reads, in one-letter code: Helicase VP6-A (325 aa).

2 disordered regions span residues 1–127 and 174–230; these read MLLA…NGRR and EGVA…EPAR. 4 stretches are compositionally biased toward basic and acidic residues: residues 8–18, 32–54, 61–79, and 92–105; these read VIKRSSEELKQ, EGGK…KDGE, GQKE…DRRI, and PGER…RGDG. An ATP-binding site is contributed by lysine 106. Positions 106 to 122 are enriched in gly residues; sequence KVGGGGGDADAGVGATG. Basic and acidic residues predominate over residues 175-229; it reads GVAEQTERSRDLRRKEKNGTHAKAVERGGRKQRKESHGDAQREGVEEEKTSEEPA.

It belongs to the orbivirus VP6 family. In terms of assembly, homohexamer.

Its subcellular location is the virion. The enzyme catalyses ATP + H2O = ADP + phosphate + H(+). In terms of biological role, ATP dependent RNA helicase essential for RNA packaging and viral transcription. Possesses ss- and dsRNA-binding capacity. The chain is Helicase VP6-A (Segment-9) from Bluetongue virus 13 (isolate USA) (BTV 13).